A 329-amino-acid chain; its full sequence is Thioredoxin domain-containing protein 6 (329 aa).

In terms of domain architecture, Thioredoxin spans 11-115 (QVNINTQELW…QKTILQQLEA (105 aa)). Residues 157–303 (GKTCTLGIIK…LFPSFKFSDK (147 aa)) are NDK. Residues 303–329 (KDKEAPPGAEAQTMVGPVEDPCMSERI) are disordered.

The protein belongs to the NDK family. As to quaternary structure, monomer and homodimer. As to expression, expressed in lung airway epithelium (at protein level).

Its subcellular location is the cytoplasm. It localises to the cytoskeleton. The protein resides in the cilium axoneme. It is found in the dynein axonemal particle. Functionally, may be a regulator of microtubule physiology. The sequence is that of Thioredoxin domain-containing protein 6 from Mus musculus (Mouse).